Reading from the N-terminus, the 1118-residue chain is Collagenase ColG (1118 aa).

The first 45 residues, 1–45 (MKKNILKILMDSYSKESKIQTVRRVTSVSLLAVYLTMNTSSLVLA), serve as a signal peptide directing secretion. A propeptide spanning residues 46–110 (KPIENTNDTS…KSKSTLRSAS (65 aa)) is cleaved from the precursor. An S1 metalloprotease domain, degrades both FALGPA (furylacryloyl-Leu-Gly-Pro-Ala) and type I collagen region spans residues 111–786 (IANTNSEKYD…QYDVVFHGVL (676 aa)). Positions 119-388 (YDFEYLNGLS…AMERITWDYD (270 aa)) are activator domain required for full activity on collagen. The interval 389–670 (GIGSNGKKVD…IQELADKYQG (282 aa)) is catalytic subdomain. The tract at residues 396–1118 (KVDHDKFLDD…SGNYELRVNK (723 aa)) is degrades soluble FALGPA peptide (furylacryloyl-Leu-Gly-Pro-Ala) but not type I collagen. Glu498 contributes to the Ca(2+) binding site. His523 contacts Zn(2+). Glu524 is a catalytic residue. Position 527 (His527) interacts with Zn(2+). Ca(2+)-binding residues include Ala531, Val535, and Gly537. Glu555 is a Zn(2+) binding site. A helper subdomain region spans residues 679–790 (DYLKDHGYKK…VFHGVLTDNA (112 aa)). Residues 787-882 (TDNADISNNK…SFTIEIKNED (96 aa)) form an S2 domain region. Ca(2+)-binding residues include Asn795, Lys796, Asp823, Asp825, Asp864, Glu890, Glu892, Asn894, Asp913, Asp918, Ala920, Asp921, Glu1009, Glu1011, Asn1013, Asp1014, Ser1032, Asp1037, Arg1039, and Asp1040. The region spanning 797–885 (APIAKVTGPS…IEIKNEDTTT (89 aa)) is the PKD domain. Positions 886–1003 (PITKEMEPND…SYSLNIKGLG (118 aa)) are S3a collagen-binding domain. Residues 1008–1118 (KEKENNDSSD…SGNYELRVNK (111 aa)) are S3b collagen-binding domain. The segment at 1102–1106 (LVYKY) is collagen-binding.

Belongs to the peptidase M9B family. Collagenase subfamily. Ca(2+) is required as a cofactor. Requires Zn(2+) as cofactor. In terms of processing, upon purification gives 67 kDa, 78 kDa, 82 kDa and 116 kDa (full-length) proteins all of which have the same N-terminus; only the longest form digests insoluble collagen. At least 2 in vivo isolated forms (C1b and C1c) are missing the second collagen-binding domain, ending on Lys-1006 and Lys-1018 respectively.

The protein resides in the secreted. The catalysed reaction is Digestion of native collagen in the triple helical region at Xaa-|-Gly bonds. With synthetic peptides, a preference is shown for Gly at P3 and P1', Pro and Ala at P2 and P2', and hydroxyproline, Ala or Arg at P3'.. With respect to regulation, inhibited by 1-10-phenanthroline. Inhibited by peptidomimetic isoamyl-phosphonyl-Gly-Pro-Ala, which binds to Zn(2+). Inhibited by broad-spectrum zinc metalloprotease inhibitor batimastat. N-aryl mercaptoacetamide-based inhibitors have been isolated that act on clostridial collagenases with submicromolar affinity while having negligibile activity on human collagenases. Functionally, clostridial collagenases are among the most efficient degraders of eukaryotic collagen known; saprophytes use collagen as a carbon source while pathogens additionally digest collagen to aid in host colonization. Has both tripeptidylcarboxypeptidase on Gly-X-Y and endopeptidase activities; the endopeptidase cuts within the triple helix region of collagen while tripeptidylcarboxypeptidase successively digests the exposed ends, thus clostridial collagenases can digest large sections of collagen. Active on soluble type I collagen, insoluble collagen, azocoll, soluble PZ-peptide (all collagenase substrates) and gelatin. The full-length protein has collagenase activity, while the in vivo derived C-terminally truncated shorter versions only act on gelatin. In vitro digestion of soluble calf skin collagen fibrils requires both ColG and ColH; ColG forms missing the second collagen-binding domain are also synergistic with ColH, although their overall efficiency is decreased. The activator domain (residues 119-388) and catalytic subdomain (389-670) open and close around substrate using a Gly-rich hinge (387-397), allowing digestion when the protein is closed. Binding of collagen requires Ca(2+) and is inhibited by EGTA; the collagen-binding domain (CBD, S3a plus S3b) specifically recognizes the triple-helical conformation made by 3 collagen protein chains in the triple-helical region. Isolated CBD (S3a plus S3b) binds collagen fibrils and sheets of many tissues. The protein is Collagenase ColG of Hathewaya histolytica (Clostridium histolyticum).